Here is a 280-residue protein sequence, read N- to C-terminus: Inner membrane ABC transporter permease protein YcjP (280 aa).

At 1–10 (MATNKRTLSR) the chain is on the cytoplasmic side. Residues 11 to 31 (IGFYCGLALFLIITLFPFFVM) form a helical membrane-spanning segment. Over 32-53 (LMTSFKGAKEAISLHPTLLPQQ) the chain is Periplasmic. A helical transmembrane segment spans residues 54–74 (WTLEHYVDIFNPMIFPFVDYF). The 192-residue stretch at 74–265 (FRNSLVVSVV…LPVVIMYALS (192 aa)) folds into the ABC transmembrane type-1 domain. Topologically, residues 75–77 (RNS) are cytoplasmic. The helical transmembrane segment at 78 to 98 (LVVSVVSSVVAVFLGILGAYA) threads the bilayer. The Periplasmic segment spans residues 99–117 (LSRLRFKGRMTINASFYTV). Residues 118–138 (YMFSGILLVVPLFKIITALGI) traverse the membrane as a helical segment. Residues 139–140 (YD) are Cytoplasmic-facing. A helical membrane pass occupies residues 141-161 (TEMALIITMVTQTLPTAVFML). Residues 162–189 (KSYFDTIPDEIEEAAMMDGLNRLQIIFR) lie on the Periplasmic side of the membrane. The chain crosses the membrane as a helical span at residues 190–210 (ITVPLAMSGLISVFVYCFMVA). At 211–214 (WNDY) the chain is on the cytoplasmic side. Residues 215-235 (LFASIFLSSASNFTLPVGLNA) traverse the membrane as a helical segment. Topologically, residues 236 to 242 (LFSTPDY) are periplasmic. A helical membrane pass occupies residues 243–263 (IWGRMMAASLVTALPVVIMYA). Residues 264 to 280 (LSERFIKSGLTAGGVKG) are Cytoplasmic-facing.

Belongs to the binding-protein-dependent transport system permease family. MalFG subfamily.

The protein localises to the cell inner membrane. In terms of biological role, probably part of the binding-protein-dependent transport system YcjNOP. Probably responsible for the translocation of the substrate across the membrane. This Escherichia coli (strain K12) protein is Inner membrane ABC transporter permease protein YcjP (ycjP).